We begin with the raw amino-acid sequence, 681 residues long: T-box brain protein 1 (681 aa).

2 disordered regions span residues 43-83 and 108-127; these read TDNL…RSKL and SQSS…FPYP. A compositionally biased stretch (polar residues) spans 58–68; it reads GMTNQSDTDNF. A compositionally biased stretch (low complexity) spans 108-122; it reads SQSSQPQSAATAPSA. A DNA-binding region (T-box) is located at residues 213–393; that stretch reads LWLKFHRHQT…HNPFAKGFRD (181 aa). A Phosphothreonine modification is found at T408. S410 carries the phosphoserine modification. The interval 447–483 is disordered; that stretch reads PGAGAGPGPGTDRSVPHTNGLLSPQQAEDPGAPSPQR. Positions 462–472 are enriched in polar residues; sequence PHTNGLLSPQQ. S594 carries the post-translational modification Phosphoserine. Residues 597 to 655 form a disordered region; it reads APAAEDAKPKDLSDSSWIETPSSIKSIDSSDSGIYEQAKRRRISPADTPVSESSSPLKS. Residues 618–628 are compositionally biased toward low complexity; that stretch reads SSIKSIDSSDS. S640 carries the phosphoserine modification.

As to quaternary structure, homodimer. Part of a complex containing CASK, TBR1 and TSPYL2; may modulate gene expression in response to neuronal synaptic activity. Forms homodimers. Interacts with FOXP2. Interacts with FOXP1. Interacts with BCL11A. In terms of tissue distribution, expressed in the developing and adult cortex. Expressed in the olfactory bulbs.

The protein resides in the nucleus. Transcriptional repressor involved in multiple aspects of cortical development, including neuronal migration, laminar and areal identity, and axonal projection. As transcriptional repressor of FEZF2, it blocks the formation of the corticospinal (CS) tract from layer 6 projection neurons, thereby restricting the origin of CS axons specifically to layer 5 neurons. The chain is T-box brain protein 1 (Tbr1) from Mus musculus (Mouse).